The sequence spans 75 residues: CLAVATA3/ESR (CLE)-related protein 33 (75 aa).

Positions 1 to 22 (MASWRMLCFVLLFTSILICHDA) are cleaved as a signal peptide. Hydroxyproline is present on residues Pro67 and Pro70. A glycan (O-linked (Ara...) hydroxyproline) is linked at Pro70.

It belongs to the CLV3/ESR signal peptide family. The O-glycosylation (arabinosylation) of the hydroxyproline Pro-70 enhances binding affinity of the CLE33p peptide for its receptor. As to expression, expressed in root vasculature.

The protein localises to the secreted. Its subcellular location is the extracellular space. In terms of biological role, signaling peptide involved in the regulation of root colonization by arbuscular mycorrhizal (AM) fungi. Moves from root to shoot to function with the receptor kinase SUNN, in a signaling pathway that repress strigolactone biosynthetic genes and strigolactone content in the roots, and consequently reduces the promotion of further colonization by AM fungi. The chain is CLAVATA3/ESR (CLE)-related protein 33 from Medicago truncatula (Barrel medic).